The chain runs to 1111 residues: Cell death abnormality protein 1 (1111 aa).

A signal peptide spans 1-18; it reads MRLILLVLLATWQVVVDT. The Extracellular segment spans residues 19 to 910; it reads RAPTFPDKLT…NGAGRSTGLT (892 aa). The region spanning 41–113 is the EMI domain; that stretch reads GDHVCTVKTI…QCCDGYYQTK (73 aa). Disulfide bonds link cysteine 45/cysteine 106, cysteine 71/cysteine 80, cysteine 105/cysteine 117, cysteine 121/cysteine 130, cysteine 125/cysteine 136, cysteine 138/cysteine 147, cysteine 160/cysteine 172, cysteine 166/cysteine 179, cysteine 181/cysteine 190, cysteine 203/cysteine 215, cysteine 209/cysteine 221, cysteine 223/cysteine 232, cysteine 245/cysteine 257, cysteine 251/cysteine 264, and cysteine 266/cysteine 275. N-linked (GlcNAc...) asparagine glycosylation is present at asparagine 66. 4 consecutive EGF-like domains span residues 118–148, 156–191, 199–233, and 241–276; these read LPDC…KYCA, WGLG…ERCE, WGPN…EFCL, and FGAE…ALCE. N-linked (GlcNAc...) asparagine glycans are attached at residues asparagine 333 and asparagine 345. Residues 421 to 458 form the EGF-like 5 domain; it reads YGPNCEKQAMCDWNHASECNPETGSCVCKPGRTGKNCS. 3 disulfide bridges follow: cysteine 425-cysteine 439, cysteine 431-cysteine 446, and cysteine 448-cysteine 457. Asparagine 456 is a glycosylation site (N-linked (GlcNAc...) asparagine). One copy of the FU repeat lies at 629-680; it reads DQKCDPNTFGFLCQETVTPSPCASTDPKNGVCLSCPPGSSGIHCEHNCPAGS. An EGF-like 6 domain is found at 681-716; that stretch reads YGDGCQQVCSCADGHGCDPTTGECICEPGYHGKTCS. Intrachain disulfides connect cysteine 685-cysteine 697, cysteine 691-cysteine 704, and cysteine 706-cysteine 715. A helical transmembrane segment spans residues 911–931; that stretch reads WFFVLLIVALCGGLGLIALFY. The tract at residues 931–1007 is interaction with trim-21; the sequence is YRNKYQKEKD…EEELENKKIH (77 aa). Topologically, residues 932-1111 are cytoplasmic; that stretch reads RNKYQKEKDP…KKRAQDNLYT (180 aa). Disordered stretches follow at residues 940–993 and 1006–1111; these read DPDM…PNGL and IHGR…NLYT. The short motif at 962 to 965 is the NPXY element; the sequence is NPLY. The span at 963 to 980 shows a compositional bias: polar residues; the sequence is PLYSRQSVFPDSDAFSSE. A Phosphotyrosine; by SRC modification is found at tyrosine 1019. The YXXL signature appears at 1019–1022; it reads YASL. Low complexity predominate over residues 1030-1039; sequence SSSSASASAS. The segment covering 1068–1083 has biased composition (polar residues); it reads NSISPAHAVTTSNHNE.

As to quaternary structure, interacts (via C-terminus) with ced-6 (via PTB domain). Interacts with nck-1; the interaction is required for ced-1 degradation through the proteasome pathway. Interacts with V-ATPase vha-10. Phosphorylation of Tyr-1019, within the YXXL motif, by src-1 is thought to initiate phagosomal formation. In terms of processing, 'Lys-48'-linked polyubiquitination by trim-21 leads to proteasomal degradation. Expressed in engulfing cells and syncytium hypodermal cells. Ced-7 is necessary for clustering around cell corpses prior to engulfment.

The protein localises to the cell membrane. It is found in the cytoplasmic vesicle. The protein resides in the phagosome membrane. Functionally, involved in programmed cell death, also called apoptosis, in both somatic and germ cells. Acts by recruiting ced-6 to phagosomes which enables actin-dependent cytoskeletal reorganization and subsequent engulfment of the apoptotic cell corpse. Has a role in the association of ppk-3 and rab-7 with the phagosomal surface which is necessary for the incorporation of lysosomes to phagosomes during phagosome maturation. Activates the expression of unfolded protein response genes, which are involved in the immune response to live bacteria. The polypeptide is Cell death abnormality protein 1 (Caenorhabditis elegans).